We begin with the raw amino-acid sequence, 142 residues long: Large ribosomal subunit protein uL13 (142 aa).

It belongs to the universal ribosomal protein uL13 family. As to quaternary structure, part of the 50S ribosomal subunit.

In terms of biological role, this protein is one of the early assembly proteins of the 50S ribosomal subunit, although it is not seen to bind rRNA by itself. It is important during the early stages of 50S assembly. The sequence is that of Large ribosomal subunit protein uL13 from Pseudomonas syringae pv. syringae (strain B728a).